A 283-amino-acid polypeptide reads, in one-letter code: uncharacterized protein (283 aa).

One can recognise an HTH araC/xylS-type domain in the interval 172-270 (EAIRDYIDER…ERSPSEYRRQ (99 aa)). 2 consecutive DNA-binding regions (H-T-H motif) follow at residues 189-210 (ESVA…QKTG) and 237-260 (VKEV…RKNT).

This is an uncharacterized protein from Escherichia coli (strain K12).